The following is a 356-amino-acid chain: 3-dehydroquinate synthase (356 aa).

NAD(+)-binding positions include 106–110 (GVVGD), 130–131 (TT), lysine 143, and lysine 152. Positions 185, 248, and 265 each coordinate Zn(2+).

It belongs to the sugar phosphate cyclases superfamily. Dehydroquinate synthase family. Requires Co(2+) as cofactor. Zn(2+) is required as a cofactor. It depends on NAD(+) as a cofactor.

It is found in the cytoplasm. The catalysed reaction is 7-phospho-2-dehydro-3-deoxy-D-arabino-heptonate = 3-dehydroquinate + phosphate. It participates in metabolic intermediate biosynthesis; chorismate biosynthesis; chorismate from D-erythrose 4-phosphate and phosphoenolpyruvate: step 2/7. In terms of biological role, catalyzes the conversion of 3-deoxy-D-arabino-heptulosonate 7-phosphate (DAHP) to dehydroquinate (DHQ). In Thermoanaerobacter pseudethanolicus (strain ATCC 33223 / 39E) (Clostridium thermohydrosulfuricum), this protein is 3-dehydroquinate synthase.